A 107-amino-acid chain; its full sequence is Small ribosomal subunit protein bS6 (107 aa).

The protein belongs to the bacterial ribosomal protein bS6 family.

Binds together with bS18 to 16S ribosomal RNA. This is Small ribosomal subunit protein bS6 from Synechococcus elongatus (strain ATCC 33912 / PCC 7942 / FACHB-805) (Anacystis nidulans R2).